The chain runs to 336 residues: Aspartate--ammonia ligase (336 aa).

This sequence belongs to the class-II aminoacyl-tRNA synthetase family. AsnA subfamily.

The protein localises to the cytoplasm. The catalysed reaction is L-aspartate + NH4(+) + ATP = L-asparagine + AMP + diphosphate + H(+). It functions in the pathway amino-acid biosynthesis; L-asparagine biosynthesis; L-asparagine from L-aspartate (ammonia route): step 1/1. The sequence is that of Aspartate--ammonia ligase from Ligilactobacillus salivarius (strain UCC118) (Lactobacillus salivarius).